The chain runs to 859 residues: MEPLSHRGLPRLSWIDTLYSNFSYGAEDYDAEGHEEQKGPPEGSETMPYIDESPTMSPQLSARSQGGGESISPTPPEGLAPGVEAGKGLEMRKLVLSGFLASEEIYINQLEALLLPMKPLKATATTSQPVLTIQQIETIFYKIQDIYEIHKEFYDNLCPKVQQWDSQVTMGHLFQKLASQLGVYKAFVDNYKVALETAEKCSQSNNQFQKISEELKVKGPKDSKDSHTSVTMEALLYKPIDRVTRSTLVLHDLLKHTPVDHPDYPLLQDALRISQNFLSSINEDIDPRRTAVTTPKGETRQLVKDGFLVEMSESSRKLRHVFLFTDVLLCAKLKKTSAGKHQQYDCKWYIPLADLVFPSPEESEASPQVHPFPDHELEDMKVKISALKSEIQKEKANKGQSRAIERLKKKMFENEFLLLLNSPTIPFRIHNRNGKSYLFLLSSDYERSEWREAIQKLQKKDLQAFVLSSVELQVLTGSCFKLRTVHNIPVTSNKDDDESPGLYGFLHVIVHSAKGFKQSANLYCTLEVDSFGYFVSKAKTRVFRDTTEPKWDEEFEIELEGSQSLRILCYEKCYDKTKVNKDNNEIVDKIMGKGQIQLDPQTVESKNWHTDVIEMNGIKVEFSMKFTSRDMSLKRTPSKKQTGVFGVKISVVTKRERSKVPYIVRQCIEEVEKRGIEEVGIYRISGVATDIQALKAVFDANNKDILLMLSDMDINAIAGTLKLYFRELPEPLLTDRLYPAFMEGIALSDPAAKENCMMHLLRSLPDPNLITFLFLLEHLKRVAEKEPINKMSLHNLATVFGPTLLRPSEVESKAHLTSAADIWSHDVMAQVQVLLYYLQHPPISFAELKRNTLYFSTDV.

A disordered region spans residues A31 to E84. The segment covering P54–S64 has biased composition (polar residues). S57 is subject to Phosphoserine. The DH domain occupies M91–D284. Residues Q301–K459 form the PH domain. A C2 domain is found at T484–I613. Positions V647–F845 constitute a Rho-GAP domain.

Interacts with DLG4. Expressed in brain, including the cortex, hippocampus, cerebellum, and brainstem, as well as the spinal cord (at protein level).

It is found in the cell projection. It localises to the dendritic spine. The protein localises to the axon. Its subcellular location is the synapse. Protein with a unique structure having two opposing regulatory activities toward small GTP-binding proteins. The C-terminus is a GTPase-activating protein domain which stimulates GTP hydrolysis by RAC1, RAC2 and CDC42. Accelerates the intrinsic rate of GTP hydrolysis of RAC1 or CDC42, leading to down-regulation of the active GTP-bound form. The central Dbl homology (DH) domain functions as guanine nucleotide exchange factor (GEF) that modulates the GTPases CDC42, RHOA and RAC1. Promotes the conversion of CDC42, RHOA and RAC1 from the GDP-bound to the GTP-bound form. Functions as an important negative regulator of neuronal RAC1 activity. Regulates macrophage functions such as CSF-1 directed motility and phagocytosis through the modulation of RAC1 activity. This is Active breakpoint cluster region-related protein from Rattus norvegicus (Rat).